The chain runs to 340 residues: UDP-3-O-(3-hydroxymyristoyl)glucosamine N-acyltransferase (340 aa).

His239 acts as the Proton acceptor in catalysis.

Belongs to the transferase hexapeptide repeat family. LpxD subfamily. In terms of assembly, homotrimer.

The catalysed reaction is a UDP-3-O-[(3R)-3-hydroxyacyl]-alpha-D-glucosamine + a (3R)-hydroxyacyl-[ACP] = a UDP-2-N,3-O-bis[(3R)-3-hydroxyacyl]-alpha-D-glucosamine + holo-[ACP] + H(+). It carries out the reaction UDP-3-O-[(3R)-3-hydroxytetradecanoyl]-alpha-D-glucosamine + (3R)-hydroxytetradecanoyl-[ACP] = UDP-2-N,3-O-bis[(3R)-3-hydroxytetradecanoyl]-alpha-D-glucosamine + holo-[ACP] + H(+). The protein operates within glycolipid biosynthesis; lipid IV(A) biosynthesis; lipid IV(A) from (3R)-3-hydroxytetradecanoyl-[acyl-carrier-protein] and UDP-N-acetyl-alpha-D-glucosamine: step 3/6. Its function is as follows. Catalyzes the N-acylation of UDP-3-O-(hydroxytetradecanoyl)glucosamine using 3-hydroxytetradecanoyl-ACP as the acyl donor. Is involved in the biosynthesis of lipid A, a phosphorylated glycolipid that anchors the lipopolysaccharide to the outer membrane of the cell. This is UDP-3-O-(3-hydroxymyristoyl)glucosamine N-acyltransferase from Yersinia pestis bv. Antiqua (strain Antiqua).